We begin with the raw amino-acid sequence, 67 residues long: Conotoxin reg3.8 (67 aa).

The signal sequence occupies residues 1–22 (MMSKLGVLLTICLLLFPLSVLP). Residues 23–50 (LDGDQLADQPARHAQSAERNARFHPVKR) constitute a propeptide that is removed on maturation. 3 cysteine pairs are disulfide-bonded: cysteine 51–cysteine 65, cysteine 52–cysteine 63, and cysteine 57–cysteine 66. The residue at position 66 (cysteine 66) is a Cysteine amide.

Belongs to the conotoxin M superfamily. As to expression, expressed by the venom duct.

It localises to the secreted. The polypeptide is Conotoxin reg3.8 (Conus regius (Crown cone)).